The primary structure comprises 296 residues: uncharacterized protein (296 aa).

To Synechocystis PCC 6803 sll0787 and M.jannaschii MJ0640.

This is an uncharacterized protein from Methanocaldococcus jannaschii (strain ATCC 43067 / DSM 2661 / JAL-1 / JCM 10045 / NBRC 100440) (Methanococcus jannaschii).